The chain runs to 261 residues: Ribosomal RNA small subunit methyltransferase A (261 aa).

Positions 12, 14, 39, 60, 81, and 104 each coordinate S-adenosyl-L-methionine.

This sequence belongs to the class I-like SAM-binding methyltransferase superfamily. rRNA adenine N(6)-methyltransferase family. RsmA subfamily.

The protein resides in the cytoplasm. It catalyses the reaction adenosine(1518)/adenosine(1519) in 16S rRNA + 4 S-adenosyl-L-methionine = N(6)-dimethyladenosine(1518)/N(6)-dimethyladenosine(1519) in 16S rRNA + 4 S-adenosyl-L-homocysteine + 4 H(+). Functionally, specifically dimethylates two adjacent adenosines (A1518 and A1519) in the loop of a conserved hairpin near the 3'-end of 16S rRNA in the 30S particle. May play a critical role in biogenesis of 30S subunits. The chain is Ribosomal RNA small subunit methyltransferase A from Albidiferax ferrireducens (strain ATCC BAA-621 / DSM 15236 / T118) (Rhodoferax ferrireducens).